Here is a 317-residue protein sequence, read N- to C-terminus: Low affinity immunoglobulin gamma Fc region receptor II-a (317 aa).

The signal sequence occupies residues Met-1 to Ser-33. Topologically, residues Gln-34–Gly-217 are extracellular. 2 Ig-like C2-type domains span residues Pro-39–Thr-118 and Glu-122–Thr-204. Cystine bridges form between Cys-62-Cys-104 and Cys-143-Cys-187. N-linked (GlcNAc...) asparagine glycans are attached at residues Asn-97 and Asn-178. The helical transmembrane segment at Ile-218–Tyr-240 threads the bilayer. Over Cys-241–Asn-317 the chain is Cytoplasmic. Tyr-288 and Tyr-304 each carry phosphotyrosine; by SRC-type Tyr-kinases. The tract at residues Asn-292–Asn-317 is disordered.

As to quaternary structure, interacts with IGHG1. Interacts with INPP5D/SHIP1 and INPPL1/SHIP2, regulating its function. Interacts with APCS and FGR. Interacts with HCK. In terms of processing, phosphorylated by SRC-type Tyr-kinases such as LYN, BLK, FYN, HCK and SYK. As to expression, found on monocytes, neutrophils and eosinophil platelets.

The protein localises to the cell membrane. Its function is as follows. Binds to the Fc region of immunoglobulins gamma. Low affinity receptor. By binding to IgG it initiates cellular responses against pathogens and soluble antigens. Promotes phagocytosis of opsonized antigens. The sequence is that of Low affinity immunoglobulin gamma Fc region receptor II-a (FCGR2A) from Homo sapiens (Human).